We begin with the raw amino-acid sequence, 252 residues long: Imidazole glycerol phosphate synthase subunit HisF (252 aa).

Active-site residues include D11 and D130.

The protein belongs to the HisA/HisF family. As to quaternary structure, heterodimer of HisH and HisF.

Its subcellular location is the cytoplasm. It catalyses the reaction 5-[(5-phospho-1-deoxy-D-ribulos-1-ylimino)methylamino]-1-(5-phospho-beta-D-ribosyl)imidazole-4-carboxamide + L-glutamine = D-erythro-1-(imidazol-4-yl)glycerol 3-phosphate + 5-amino-1-(5-phospho-beta-D-ribosyl)imidazole-4-carboxamide + L-glutamate + H(+). It participates in amino-acid biosynthesis; L-histidine biosynthesis; L-histidine from 5-phospho-alpha-D-ribose 1-diphosphate: step 5/9. IGPS catalyzes the conversion of PRFAR and glutamine to IGP, AICAR and glutamate. The HisF subunit catalyzes the cyclization activity that produces IGP and AICAR from PRFAR using the ammonia provided by the HisH subunit. This is Imidazole glycerol phosphate synthase subunit HisF from Rhodospirillum rubrum (strain ATCC 11170 / ATH 1.1.1 / DSM 467 / LMG 4362 / NCIMB 8255 / S1).